A 488-amino-acid polypeptide reads, in one-letter code: Probable malate:quinone oxidoreductase (488 aa).

The protein belongs to the MQO family. FAD serves as cofactor.

It carries out the reaction (S)-malate + a quinone = a quinol + oxaloacetate. It participates in carbohydrate metabolism; tricarboxylic acid cycle; oxaloacetate from (S)-malate (quinone route): step 1/1. The protein is Probable malate:quinone oxidoreductase of Neisseria meningitidis serogroup B (strain ATCC BAA-335 / MC58).